We begin with the raw amino-acid sequence, 494 residues long: 3-octaprenyl-4-hydroxybenzoate carboxy-lyase (494 aa).

Asparagine 172 contacts Mn(2+). Residues 175–177 (IYR), 189–191 (RWL), and 194–195 (RG) each bind prenylated FMN. Glutamate 238 lines the Mn(2+) pocket. Aspartate 294 acts as the Proton donor in catalysis.

This sequence belongs to the UbiD family. In terms of assembly, homohexamer. The cofactor is prenylated FMN. Mn(2+) serves as cofactor.

The protein resides in the cell membrane. It carries out the reaction a 4-hydroxy-3-(all-trans-polyprenyl)benzoate + H(+) = a 2-(all-trans-polyprenyl)phenol + CO2. It functions in the pathway cofactor biosynthesis; ubiquinone biosynthesis. Catalyzes the decarboxylation of 3-octaprenyl-4-hydroxy benzoate to 2-octaprenylphenol, an intermediate step in ubiquinone biosynthesis. The protein is 3-octaprenyl-4-hydroxybenzoate carboxy-lyase of Albidiferax ferrireducens (strain ATCC BAA-621 / DSM 15236 / T118) (Rhodoferax ferrireducens).